Consider the following 367-residue polypeptide: NADH-quinone oxidoreductase subunit H (367 aa).

8 consecutive transmembrane segments (helical) span residues A19 to V39, I87 to I107, I132 to G152, I178 to V198, M204 to L224, I266 to I286, I291 to W311, and G328 to V348.

The protein belongs to the complex I subunit 1 family. As to quaternary structure, NDH-1 is composed of 14 different subunits. Subunits NuoA, H, J, K, L, M, N constitute the membrane sector of the complex.

The protein localises to the cell inner membrane. It carries out the reaction a quinone + NADH + 5 H(+)(in) = a quinol + NAD(+) + 4 H(+)(out). In terms of biological role, NDH-1 shuttles electrons from NADH, via FMN and iron-sulfur (Fe-S) centers, to quinones in the respiratory chain. The immediate electron acceptor for the enzyme in this species is believed to be ubiquinone. Couples the redox reaction to proton translocation (for every two electrons transferred, four hydrogen ions are translocated across the cytoplasmic membrane), and thus conserves the redox energy in a proton gradient. This subunit may bind ubiquinone. This Ehrlichia chaffeensis (strain ATCC CRL-10679 / Arkansas) protein is NADH-quinone oxidoreductase subunit H.